The sequence spans 445 residues: Glutamyl-tRNA(Gln) amidotransferase subunit D (445 aa).

The Asparaginase/glutaminase domain occupies 93–425 (SEIKIISTGG…EKIRSLMISN (333 aa)). Active-site residues include Thr103, Thr179, Asp180, and Lys258.

This sequence belongs to the asparaginase 1 family. GatD subfamily. As to quaternary structure, heterodimer of GatD and GatE.

It catalyses the reaction L-glutamyl-tRNA(Gln) + L-glutamine + ATP + H2O = L-glutaminyl-tRNA(Gln) + L-glutamate + ADP + phosphate + H(+). In terms of biological role, allows the formation of correctly charged Gln-tRNA(Gln) through the transamidation of misacylated Glu-tRNA(Gln) in organisms which lack glutaminyl-tRNA synthetase. The reaction takes place in the presence of glutamine and ATP through an activated gamma-phospho-Glu-tRNA(Gln). The GatDE system is specific for glutamate and does not act on aspartate. The protein is Glutamyl-tRNA(Gln) amidotransferase subunit D of Saccharolobus islandicus (strain Y.N.15.51 / Yellowstone #2) (Sulfolobus islandicus).